The following is a 283-amino-acid chain: MLTLSDIGELRNHLHAARRDAKRIALVPTMGNLHAGHLALVDAARRDADVVVATIFVNPLQFGANEDFASYPRTLEADAQALASHGCDLVFTPRTDALYPHGLEAHTQVSVPDVSEGLCGANRPGHFTGVATVVSLLFNLVQPDAAYFGRKDYQQFMVIRKLVADLHFPIEIVGVPTQRAEDGLALSSRNGYLSAAERQRAPALYRTLCQVHDALRAGEAPPTALRDGLAALAEQGFKPDYLELRRAQDLGPIAPDTQEAILLVAAHLGTTRLIDNLAVSLPR.

Residue 30–37 (MGNLHAGH) participates in ATP binding. Histidine 37 (proton donor) is an active-site residue. Position 61 (glutamine 61) interacts with (R)-pantoate. A beta-alanine-binding site is contributed by glutamine 61. Residue 149–152 (GRKD) participates in ATP binding. Glutamine 155 serves as a coordination point for (R)-pantoate. Position 186-189 (186-189 (LSSR)) interacts with ATP.

It belongs to the pantothenate synthetase family. In terms of assembly, homodimer.

The protein localises to the cytoplasm. It catalyses the reaction (R)-pantoate + beta-alanine + ATP = (R)-pantothenate + AMP + diphosphate + H(+). Its pathway is cofactor biosynthesis; (R)-pantothenate biosynthesis; (R)-pantothenate from (R)-pantoate and beta-alanine: step 1/1. Its function is as follows. Catalyzes the condensation of pantoate with beta-alanine in an ATP-dependent reaction via a pantoyl-adenylate intermediate. The chain is Pantothenate synthetase from Chromohalobacter salexigens (strain ATCC BAA-138 / DSM 3043 / CIP 106854 / NCIMB 13768 / 1H11).